The primary structure comprises 100 residues: Urease subunit gamma (100 aa).

The protein belongs to the urease gamma subunit family. In terms of assembly, heterotrimer of UreA (gamma), UreB (beta) and UreC (alpha) subunits. Three heterotrimers associate to form the active enzyme.

The protein localises to the cytoplasm. It carries out the reaction urea + 2 H2O + H(+) = hydrogencarbonate + 2 NH4(+). It functions in the pathway nitrogen metabolism; urea degradation; CO(2) and NH(3) from urea (urease route): step 1/1. The polypeptide is Urease subunit gamma (Limosilactobacillus fermentum (Lactobacillus fermentum)).